A 232-amino-acid polypeptide reads, in one-letter code: uncharacterized protein (232 aa).

The next 7 helical transmembrane spans lie at 17–37, 54–74, 84–104, 107–127, 138–158, 161–181, and 203–223; these read FLAK…VFAY, MSFM…SGAL, ALFL…FMIY, GSIV…SVYG, GSYL…NMFF, SGLN…LTAY, and MAVV…LYLL.

It belongs to the BI1 family.

It is found in the cell membrane. This is an uncharacterized protein from Borreliella burgdorferi (strain ATCC 35210 / DSM 4680 / CIP 102532 / B31) (Borrelia burgdorferi).